We begin with the raw amino-acid sequence, 114 residues long: MNVRANRVSEQMKKELGDILNRKIKDPRLGFVTVTGVDVTGDLQEAKVFISILGTDKEKENTLLALEKAHGFIRSEIGRRIRLRKVPEMSFEIDNSIAYGNRIDELLRDLNNDQ.

It belongs to the RbfA family. As to quaternary structure, monomer. Binds 30S ribosomal subunits, but not 50S ribosomal subunits or 70S ribosomes.

Its subcellular location is the cytoplasm. In terms of biological role, one of several proteins that assist in the late maturation steps of the functional core of the 30S ribosomal subunit. Associates with free 30S ribosomal subunits (but not with 30S subunits that are part of 70S ribosomes or polysomes). Required for efficient processing of 16S rRNA. May interact with the 5'-terminal helix region of 16S rRNA. This is Ribosome-binding factor A from Listeria innocua serovar 6a (strain ATCC BAA-680 / CLIP 11262).